We begin with the raw amino-acid sequence, 892 residues long: MYYHSLSSYSILFFLFSLFHHLPCASSNQGLGWCESLFQCGNITADFPFWGGNRHKPCGHPLLELHCNNNNITSLYISNQEFYVRQINQTSNTLTLARSDLLGSFCSSYAYNTTTLPPEIFELSPTYKSLTVLYHCDPKLSYRSSYTCPALGTFSMSQSVDYQYSCQNSFTVNVPTSFHPEERGLNLTNLESALRKGFEVKLVIDEIPCQQCSSTRGICSFNGTTQSCCNATSPSGGVSCVPYQHSADEVYRRCSESFSCGSQRDLNYPLWKPGREECGHPNFKLNCSGGFAEINIASVKFRILDSYRSLIRLARSDYIGDLCPANPLTAPFIEKFLPVLELTGETELLTLYYGCRFNSSDIPANIYVGELGCDEGRSYYVTRNLSSPLLDSSRGVLNNLREMCKRNVSVPASGPALFDLQTRPNQDNLKMALDQGFRMLITSDCERCRGSGGACGYNQTSSGFGCYCKDGKCGYEYDDGFFRRHRRFIATLVRYTFIALGALTGVVIVFLVLLCPCFRVQIFRKRKTSDEVRLQKLKALIPLKHYTYAEVKKMTKSFTEVVGRGGFGIVYSGTLSDSSMVAVKVLKDSKGTDGEDFINEVASMSQTSHVNIVSLLGFCCEGSRRAIIYEFLGNGSLDKFISDKSSVNLDLKTLYGIALGVARGLEYLHYGCKTRIVHFDIKPQNVLLDDNLCPKVSDFGLAKLCEKKESILSLLDTRGTIGYIAPEMISRLYGSVSHKSDVYSYGMLVLEMIGARKKERFDQNSRSDGSSIYFPEWIYKDLEKANIKDIEKTENGGLIENGISSEEEEIARKMTLVGLWCIQSSPSDRPPMNKVVEMMEGSLDALEVPPRPVLQQISASSVSDSFWNSEESSSASDILVFSTNSKLESSSL.

The first 27 residues, 1 to 27, serve as a signal peptide directing secretion; that stretch reads MYYHSLSSYSILFFLFSLFHHLPCASS. Residues 28-496 are Extracellular-facing; sequence NQGLGWCESL…RFIATLVRYT (469 aa). N-linked (GlcNAc...) asparagine glycans are attached at residues Asn42, Asn71, Asn88, Asn112, Asn186, Asn222, Asn230, Asn286, Asn358, Asn384, Asn407, and Asn458. A helical membrane pass occupies residues 497–517; that stretch reads FIALGALTGVVIVFLVLLCPC. At 518 to 892 the chain is on the cytoplasmic side; the sequence is FRVQIFRKRK…TNSKLESSSL (375 aa). Residue Thr547 is modified to Phosphothreonine. The Protein kinase domain occupies 556–854; the sequence is KSFTEVVGRG…ALEVPPRPVL (299 aa). ATP contacts are provided by residues 562-570 and Lys584; that span reads VGRGGFGIV. A Phosphotyrosine modification is found at Tyr629. The Proton acceptor role is filled by Asp680. Phosphothreonine is present on residues Thr717 and Thr720.

The protein belongs to the protein kinase superfamily. Ser/Thr protein kinase family.

The protein resides in the membrane. It catalyses the reaction L-seryl-[protein] + ATP = O-phospho-L-seryl-[protein] + ADP + H(+). The enzyme catalyses L-threonyl-[protein] + ATP = O-phospho-L-threonyl-[protein] + ADP + H(+). This is LEAF RUST 10 DISEASE-RESISTANCE LOCUS RECEPTOR-LIKE PROTEIN KINASE-like 2.8 from Arabidopsis thaliana (Mouse-ear cress).